Consider the following 282-residue polypeptide: 4-diphosphocytidyl-2-C-methyl-D-erythritol kinase (282 aa).

The active site involves lysine 13. Position 96–106 (96–106) interacts with ATP; sequence PMGGGIGGGSS. Residue aspartate 138 is part of the active site.

The protein belongs to the GHMP kinase family. IspE subfamily.

The enzyme catalyses 4-CDP-2-C-methyl-D-erythritol + ATP = 4-CDP-2-C-methyl-D-erythritol 2-phosphate + ADP + H(+). The protein operates within isoprenoid biosynthesis; isopentenyl diphosphate biosynthesis via DXP pathway; isopentenyl diphosphate from 1-deoxy-D-xylulose 5-phosphate: step 3/6. Functionally, catalyzes the phosphorylation of the position 2 hydroxy group of 4-diphosphocytidyl-2C-methyl-D-erythritol. This Pseudomonas syringae pv. tomato (strain ATCC BAA-871 / DC3000) protein is 4-diphosphocytidyl-2-C-methyl-D-erythritol kinase.